The following is a 778-amino-acid chain: Ubiquitin thioesterase trabid (778 aa).

RanBP2-type zinc fingers lie at residues 5 to 36 and 89 to 118; these read KDDAQKWKCETCTYENYPSSLKCTMCQASKPL and DSEKWPCKVCTYLNWPRSLRCVQCCTKRGG. Over residues 187–197 the composition is skewed to polar residues; it reads ASHNQSQSQHR. Residues 187–226 form a disordered region; the sequence is ASHNQSQSQHRQPVLQQQMQLQLQPQQQRESSSSAAVPPQ. A compositionally biased stretch (low complexity) spans 198–226; the sequence is QPVLQQQMQLQLQPQQQRESSSSAAVPPQ. Residues 232 to 261 form a RanBP2-type 3 zinc finger; the sequence is YVSKWACNSCTYENWPRSIKCSMCGKTRER. The interval 265–290 is disordered; sequence GSQNDLHASSSLNSQEENQQQLQQPN. The segment covering 273-288 has biased composition (low complexity); that stretch reads SSSLNSQEENQQQLQQ. The region spanning 507–665 is the OTU domain; the sequence is MFVLWNRSAG…RGHFSALVPM (159 aa). The Nucleophile role is filled by Cys518. The active-site Proton acceptor is the His658. 3 positions are modified to phosphoserine: Ser770, Ser771, and Ser775.

It belongs to the peptidase C64 family. In terms of assembly, interacts with Apc.

It catalyses the reaction Thiol-dependent hydrolysis of ester, thioester, amide, peptide and isopeptide bonds formed by the C-terminal Gly of ubiquitin (a 76-residue protein attached to proteins as an intracellular targeting signal).. Its function is as follows. Positive regulator of the Wnt signaling pathway. Specifically cleaves 'Lys-63'-linked ubiquitin chains. May act by deubiquitinating APC protein, a negative regulator of Wnt-mediated transcription. Required for an efficient wg response, but not for other signaling responses, in the eye. This Drosophila melanogaster (Fruit fly) protein is Ubiquitin thioesterase trabid (trbd).